A 486-amino-acid chain; its full sequence is Glutamyl-tRNA(Gln) amidotransferase subunit A (486 aa).

Active-site charge relay system residues include K74 and S149. The active-site Acyl-ester intermediate is the S173.

It belongs to the amidase family. GatA subfamily. Heterotrimer of A, B and C subunits.

The enzyme catalyses L-glutamyl-tRNA(Gln) + L-glutamine + ATP + H2O = L-glutaminyl-tRNA(Gln) + L-glutamate + ADP + phosphate + H(+). Functionally, allows the formation of correctly charged Gln-tRNA(Gln) through the transamidation of misacylated Glu-tRNA(Gln) in organisms which lack glutaminyl-tRNA synthetase. The reaction takes place in the presence of glutamine and ATP through an activated gamma-phospho-Glu-tRNA(Gln). The polypeptide is Glutamyl-tRNA(Gln) amidotransferase subunit A (Prochlorococcus marinus (strain MIT 9303)).